A 111-amino-acid chain; its full sequence is SRA stem-loop-interacting RNA-binding protein, mitochondrial (111 aa).

Positions 19–96 (PVAFVRKIPW…VKLHVQPQRP (78 aa)) constitute an RRM domain. Positions 92–111 (QPQRPKALQGDQTSDEEKDF) are disordered. A Phosphothreonine modification is found at Thr-104. A Phosphoserine modification is found at Ser-105.

It is found in the mitochondrion. It localises to the nucleus. Functionally, RNA-binding protein that acts as a nuclear receptor corepressor. Probably acts by binding the SRA RNA, and repressing the SRA-mediated nuclear receptor coactivation. Binds the STR7 loop of SRA RNA. Also able to repress glucocorticoid (GR), androgen (AR), thyroid (TR) and VDR-mediated transactivation. The chain is SRA stem-loop-interacting RNA-binding protein, mitochondrial (SLIRP) from Bos taurus (Bovine).